We begin with the raw amino-acid sequence, 135 residues long: HTH-type transcriptional activator AarP (135 aa).

An HTH araC/xylS-type domain is found at 22–120; that stretch reads SEILVWIEGN…GISPSLYRLS (99 aa). 2 DNA-binding regions (H-T-H motif) span residues 39-60 and 87-110; these read DDIA…RKIV and VIDI…KAYL.

Functionally, transcriptional activator of 2'-N-acetyltransferase. This chain is HTH-type transcriptional activator AarP (aarP), found in Providencia stuartii.